A 236-amino-acid polypeptide reads, in one-letter code: Proteasome subunit alpha (236 aa).

This sequence belongs to the peptidase T1A family. The 20S proteasome core is composed of 14 alpha and 14 beta subunits that assemble into four stacked heptameric rings, resulting in a barrel-shaped structure. The two inner rings, each composed of seven catalytic beta subunits, are sandwiched by two outer rings, each composed of seven alpha subunits. The catalytic chamber with the active sites is on the inside of the barrel. Has a gated structure, the ends of the cylinder being occluded by the N-termini of the alpha-subunits. Is capped by the proteasome-associated ATPase, ARC.

The protein localises to the cytoplasm. It participates in protein degradation; proteasomal Pup-dependent pathway. With respect to regulation, the formation of the proteasomal ATPase ARC-20S proteasome complex, likely via the docking of the C-termini of ARC into the intersubunit pockets in the alpha-rings, may trigger opening of the gate for substrate entry. Interconversion between the open-gate and close-gate conformations leads to a dynamic regulation of the 20S proteasome proteolysis activity. In terms of biological role, component of the proteasome core, a large protease complex with broad specificity involved in protein degradation. The protein is Proteasome subunit alpha of Pseudarthrobacter chlorophenolicus (strain ATCC 700700 / DSM 12829 / CIP 107037 / JCM 12360 / KCTC 9906 / NCIMB 13794 / A6) (Arthrobacter chlorophenolicus).